Consider the following 198-residue polypeptide: Glycerol-3-phosphate acyltransferase (198 aa).

The next 5 helical transmembrane spans lie at 5 to 25 (LILLSLLAYVIGSIPSGLWIG), 56 to 76 (SIVTVMDILKGTVATLLPFFF), 84 to 104 (FWLLTGAFAIIGHSFPLFAGF), 114 to 134 (AGVILAYAPLLFVAALVVFLV), and 158 to 178 (LFMGDWILIVLVACIALFVIW).

This sequence belongs to the PlsY family. As to quaternary structure, probably interacts with PlsX.

The protein resides in the cell membrane. The catalysed reaction is an acyl phosphate + sn-glycerol 3-phosphate = a 1-acyl-sn-glycero-3-phosphate + phosphate. Its pathway is lipid metabolism; phospholipid metabolism. Catalyzes the transfer of an acyl group from acyl-phosphate (acyl-PO(4)) to glycerol-3-phosphate (G3P) to form lysophosphatidic acid (LPA). This enzyme utilizes acyl-phosphate as fatty acyl donor, but not acyl-CoA or acyl-ACP. The protein is Glycerol-3-phosphate acyltransferase of Listeria monocytogenes serovar 1/2a (strain ATCC BAA-679 / EGD-e).